The following is a 138-amino-acid chain: Ferredoxin-2 (138 aa).

Residues 27-117 enclose the 2Fe-2S ferredoxin-type domain; it reads ADANLQSTDF…DAKIVYNLKH (91 aa). [2Fe-2S] cluster is bound by residues cysteine 62, cysteine 67, cysteine 70, and cysteine 100.

It belongs to the 2Fe2S plant-type ferredoxin family. [2Fe-2S] cluster serves as cofactor.

Functionally, ferredoxins are iron-sulfur proteins that transfer electrons in a wide variety of metabolic reactions. The polypeptide is Ferredoxin-2 (fer2) (Haloarcula marismortui (strain ATCC 43049 / DSM 3752 / JCM 8966 / VKM B-1809) (Halobacterium marismortui)).